The primary structure comprises 247 residues: 3-deoxy-manno-octulosonate cytidylyltransferase (247 aa).

This sequence belongs to the KdsB family.

The protein localises to the cytoplasm. The catalysed reaction is 3-deoxy-alpha-D-manno-oct-2-ulosonate + CTP = CMP-3-deoxy-beta-D-manno-octulosonate + diphosphate. It participates in nucleotide-sugar biosynthesis; CMP-3-deoxy-D-manno-octulosonate biosynthesis; CMP-3-deoxy-D-manno-octulosonate from 3-deoxy-D-manno-octulosonate and CTP: step 1/1. The protein operates within bacterial outer membrane biogenesis; lipopolysaccharide biosynthesis. In terms of biological role, activates KDO (a required 8-carbon sugar) for incorporation into bacterial lipopolysaccharide in Gram-negative bacteria. This Methylorubrum extorquens (strain PA1) (Methylobacterium extorquens) protein is 3-deoxy-manno-octulosonate cytidylyltransferase.